Reading from the N-terminus, the 604-residue chain is MHRYRTHTCGALRPSDVGATVRLSGWCHRVRDHGGVLFIDLRDHYGVTQCVVDADSAAFRAAEAVRSEWVIRVDGRVRRRPEGTENADLPTGAVELYITDLEVLGQAVELPMPVFGELDYPEETRLRYRFLDLRREKLHANIMKRGAIIDSLRRRMREGGFFEFQTPILTASSPEGARDFLVPSRLHPGKFYALPQAPQQFKQLTMIAGFDRYFQIAPCFRDEDARADRSPGEFYQLDIEMSFVTQEDVFQAVEPVLRGVFEEFAEGWRVTGTFPRIPYAEAMLKYGVDKPDLRNPLIIVDVTQEFSAEAVTFNAFKSVIRAGGVVRAIPAPGAGAQPRSFFDRLNNWARGEGAPGLGYIVFEEEGGVLSGRGPIAKFVPPEVQAAIAAKAGLKAGDAVFFAAGVEAKAAGLAGKARIRIGDDLGLTDKDQFAFCWITDFPMYEWNEDEKRIDFSHNPFSMPNYDHDGFLGLDPADAETILGIKAFQYDIVCNGIELSSGAIRNHRPDVMEKAFAIAGYGREVLEQKFGGMLNALRMGAPPHGGIAPGVDRIVMLLCHEPNIREVVLFPMNQRAEDLMMGAPSEVTPKQLRELHIRLNLPDRSA.

Glutamate 175 provides a ligand contact to L-aspartate. Residues 199 to 202 (QQFK) are aspartate. Residues arginine 221 and histidine 456 each coordinate L-aspartate. Residue 221-223 (RDE) coordinates ATP. An ATP-binding site is contributed by glutamate 496. L-aspartate is bound at residue arginine 503. 548 to 551 (GVDR) provides a ligand contact to ATP.

Belongs to the class-II aminoacyl-tRNA synthetase family. Type 1 subfamily. As to quaternary structure, homodimer.

Its subcellular location is the cytoplasm. It carries out the reaction tRNA(Asx) + L-aspartate + ATP = L-aspartyl-tRNA(Asx) + AMP + diphosphate. Its function is as follows. Aspartyl-tRNA synthetase with relaxed tRNA specificity since it is able to aspartylate not only its cognate tRNA(Asp) but also tRNA(Asn). Reaction proceeds in two steps: L-aspartate is first activated by ATP to form Asp-AMP and then transferred to the acceptor end of tRNA(Asp/Asn). The sequence is that of Aspartate--tRNA(Asp/Asn) ligase from Methylobacterium sp. (strain 4-46).